Consider the following 261-residue polypeptide: Glucosamine-6-phosphate deaminase (261 aa).

The active-site Proton acceptor; for enolization step is the aspartate 67. The For ring-opening step role is filled by aspartate 136. Catalysis depends on histidine 138, which acts as the Proton acceptor; for ring-opening step. Glutamate 143 functions as the For ring-opening step in the catalytic mechanism.

Belongs to the glucosamine/galactosamine-6-phosphate isomerase family. NagB subfamily.

It catalyses the reaction alpha-D-glucosamine 6-phosphate + H2O = beta-D-fructose 6-phosphate + NH4(+). The protein operates within amino-sugar metabolism; N-acetylneuraminate degradation; D-fructose 6-phosphate from N-acetylneuraminate: step 5/5. Its function is as follows. Catalyzes the reversible isomerization-deamination of glucosamine 6-phosphate (GlcN6P) to form fructose 6-phosphate (Fru6P) and ammonium ion. The chain is Glucosamine-6-phosphate deaminase from Mycolicibacterium smegmatis (strain ATCC 700084 / mc(2)155) (Mycobacterium smegmatis).